The sequence spans 436 residues: 3-ketoacyl-CoA thiolase (436 aa).

Cysteine 99 functions as the Acyl-thioester intermediate in the catalytic mechanism. Residues histidine 392 and cysteine 422 each act as proton acceptor in the active site.

This sequence belongs to the thiolase-like superfamily. Thiolase family. In terms of assembly, heterotetramer of two alpha chains (FadJ) and two beta chains (FadI).

It localises to the cytoplasm. It carries out the reaction an acyl-CoA + acetyl-CoA = a 3-oxoacyl-CoA + CoA. It participates in lipid metabolism; fatty acid beta-oxidation. Its function is as follows. Catalyzes the final step of fatty acid oxidation in which acetyl-CoA is released and the CoA ester of a fatty acid two carbons shorter is formed. The sequence is that of 3-ketoacyl-CoA thiolase from Salmonella paratyphi C (strain RKS4594).